The chain runs to 206 residues: Thiamine-phosphate synthase (206 aa).

4-amino-2-methyl-5-(diphosphooxymethyl)pyrimidine-binding positions include glutamine 38 to lysine 42 and asparagine 70. The Mg(2+) site is built by aspartate 71 and aspartate 90. Threonine 109 serves as a coordination point for 4-amino-2-methyl-5-(diphosphooxymethyl)pyrimidine. Residue threonine 135–threonine 137 coordinates 2-[(2R,5Z)-2-carboxy-4-methylthiazol-5(2H)-ylidene]ethyl phosphate. Lysine 138 serves as a coordination point for 4-amino-2-methyl-5-(diphosphooxymethyl)pyrimidine. 2-[(2R,5Z)-2-carboxy-4-methylthiazol-5(2H)-ylidene]ethyl phosphate-binding positions include glycine 165 and valine 185–serine 186.

Belongs to the thiamine-phosphate synthase family. The cofactor is Mg(2+).

The catalysed reaction is 2-[(2R,5Z)-2-carboxy-4-methylthiazol-5(2H)-ylidene]ethyl phosphate + 4-amino-2-methyl-5-(diphosphooxymethyl)pyrimidine + 2 H(+) = thiamine phosphate + CO2 + diphosphate. It carries out the reaction 2-(2-carboxy-4-methylthiazol-5-yl)ethyl phosphate + 4-amino-2-methyl-5-(diphosphooxymethyl)pyrimidine + 2 H(+) = thiamine phosphate + CO2 + diphosphate. The enzyme catalyses 4-methyl-5-(2-phosphooxyethyl)-thiazole + 4-amino-2-methyl-5-(diphosphooxymethyl)pyrimidine + H(+) = thiamine phosphate + diphosphate. Its pathway is cofactor biosynthesis; thiamine diphosphate biosynthesis; thiamine phosphate from 4-amino-2-methyl-5-diphosphomethylpyrimidine and 4-methyl-5-(2-phosphoethyl)-thiazole: step 1/1. In terms of biological role, condenses 4-methyl-5-(beta-hydroxyethyl)thiazole monophosphate (THZ-P) and 2-methyl-4-amino-5-hydroxymethyl pyrimidine pyrophosphate (HMP-PP) to form thiamine monophosphate (TMP). The protein is Thiamine-phosphate synthase of Fusobacterium nucleatum subsp. nucleatum (strain ATCC 25586 / DSM 15643 / BCRC 10681 / CIP 101130 / JCM 8532 / KCTC 2640 / LMG 13131 / VPI 4355).